A 2224-amino-acid chain; its full sequence is MFPGCPRLWVLVVLGTSWVGWGSQGTEAAQLRQFYVAAQGISWSYRPEPTNSSLNLSVTSFKKIVYREYEPYFKKEKPQSTISGLLGPTLYAEVGDIIKVHFKNKADKPLSIHPQGIRYSKLSEGASYLDHTFPAEKMDDAVAPGREYTYEWSISEDSGPTHDDPPCLTHIYYSHENLIEDFNSGLIGPLLICKKGTLTEGGTQKTFDKQIVLLFAVFDESKSWSQSSSLMYTVNGYVNGTMPDITVCAHDHISWHLLGMSSGPELFSIHFNGQVLEQNHHKVSAITLVSATSTTANMTVGPEGKWIISSLTPKHLQAGMQAYIDIKNCPKKTRNLKKITREQRRHMKRWEYFIAAEEVIWDYAPVIPANMDKKYRSQHLDNFSNQIGKHYKKVMYTQYEDESFTKHTVNPNMKEDGILGPIIRAQVRDTLKIVFKNMASRPYSIYPHGVTFSPYEDEVNSSFTSGRNNTMIRAVQPGETYTYKWNILEFDEPTENDAQCLTRPYYSDVDIMRDIASGLIGLLLICKSRSLDRRGIQRAADIEQQAVFAVFDENKSWYLEDNINKFCENPDEVKRDDPKFYESNIMSTINGYVPESITTLGFCFDDTVQWHFCSVGTQNEILTIHFTGHSFIYGKRHEDTLTLFPMRGESVTVTMDNVGTWMLTSMNSSPRSKKLRLKFRDVKCIPDDDEDSYEIFEPPESTVMATRKMHDRLEPEDEESDADYDYQNRLAAALGIRSFRNSSLNQEEEEFNLTALALENGTEFVSSNTDIIVGSNYSSPSNISKFTVNNLAEPQKAPSHQQATTAGSPLRHLIGKNSVLNSSTAEHSSPYSEDPIEDPLQPDVTGIRLLSLGAGEFKSQEHAKHKGPKVERDQAAKHRFSWMKLLAHKVGRHLSQDTGSPSGMRPWEDLPSQDTGSPSRMRPWKDPPSDLLLLKQSNSSKILVGRWHLASEKGSYEIIQDTDEDTAVNNWLISPQNASRAWGESTPLANKPGKQSGHPKFPRVRHKSLQVRQDGGKSRLKKSQFLIKTRKKKKEKHTHHAPLSPRTFHPLRSEAYNTFSERRLKHSLVLHKSNETSLPTDLNQTLPSMDFGWIASLPDHNQNSSNDTGQASCPPGLYQTVPPEEHYQTFPIQDPDQMHSTSDPSHRSSSPELSEMLEYDRSHKSFPTDISQMSPSSEHEVWQTVISPDLSQVTLSPELSQTNLSPDLSHTTLSPELIQRNLSPALGQMPISPDLSHTTLSPDLSHTTLSLDLSQTNLSPELSQTNLSPALGQMPLSPDLSHTTLSLDFSQTNLSPELSHMTLSPELSQTNLSPALGQMPISPDLSHTTLSLDFSQTNLSPELSQTNLSPALGQMPLSPDPSHTTLSLDLSQTNLSPELSQTNLSPDLSEMPLFADLSQIPLTPDLDQMTLSPDLGETDLSPNFGQMSLSPDLSQVTLSPDISDTTLLPDLSQISPPPDLDQIFYPSESSQSLLLQEFNESFPYPDLGQMPSPSSPTLNDTFLSKEFNPLVIVGLSKDGTDYIEIIPKEEVQSSEDDYAEIDYVPYDDPYKTDVRTNINSSRDPDNIAAWYLRSNNGNRRNYYIAAEEISWDYSEFVQRETDIEDSDDIPEDTTYKKVVFRKYLDSTFTKRDPRGEYEEHLGILGPIIRAEVDDVIQVRFKNLASRPYSLHAHGLSYEKSSEGKTYEDDSPEWFKEDNAVQPNSSYTYVWHATERSGPESPGSACRAWAYYSAVNPEKDIHSGLIGPLLICQKGILHKDSNMPMDMREFVLLFMTFDEKKSWYYEKKSRSSWRLTSSEMKKSHEFHAINGMIYSLPGLKMYEQEWVRLHLLNIGGSQDIHVVHFHGQTLLENGNKQHQLGVWPLLPGSFKTLEMKASKPGWWLLNTEVGENQRAGMQTPFLIMDRDCRMPMGLSTGIISDSQIKASEFLGYWEPRLARLNNGGSYNAWSVEKLAAEFASKPWIQVDMQKEVIITGIQTQGAKHYLKSCYTTEFYVAYSSNQINWQIFKGNSTRNVMYFNGNSDASTIKENQFDPPIVARYIRISPTRAYNRPTLRLELQGCEVNGCSTPLGMENGKIENKQITASSFKKSWWGDYWEPFRARLNAQGRVNAWQAKANNNKQWLEIDLLKIKKITAIITQGCKSLSSEMYVKSYTIHYSEQGVEWKPYRLKSSMVDKIFEGNTNTKGHVKNFFNPPIISRFIRVIPKTWNQSIALRLELFGCDIY.

The signal sequence occupies residues 1–28 (MFPGCPRLWVLVVLGTSWVGWGSQGTEA). 4 Plastocyanin-like domains span residues 30–193 (QLRQ…LLIC), 203–329 (TQKT…IKNC), 348–526 (KRWE…LLIC), and 536–684 (IQRA…DVKC). 2 F5/8 type A domains span residues 30–329 (QLRQ…IKNC) and 348–684 (KRWE…DVKC). N-linked (GlcNAc...) asparagine glycans are attached at residues N51 and N55. Residues D139 and D140 each contribute to the Ca(2+) site. A disulfide bond links C167 and C193. 5 N-linked (GlcNAc...) asparagine glycosylation sites follow: N239, N297, N382, N460, and N468. C248 and C329 are joined by a disulfide. A disulfide bond links C500 and C526. N-linked (GlcNAc...) asparagine glycosylation occurs at N554. C603 and C684 are joined by a disulfide. At T640 the chain carries Phosphothreonine. The segment at 692-1573 (SYEIFEPPES…PDNIAAWYLR (882 aa)) is b. Sulfotyrosine occurs at positions 693, 724, and 726. A propeptide spans 738 to 1573 (SFRNSSLNQE…PDNIAAWYLR (836 aa)) (activation peptide (connecting region)). N-linked (GlcNAc...) asparagine glycans are attached at residues N741, N752, N760, N776, and N782. A glycan (O-linked (GalNAc...) threonine) is linked at T805. The N-linked (GlcNAc...) asparagine glycan is linked to N821. A compositionally biased stretch (polar residues) spans 822–831 (SSTAEHSSPY). The disordered stretch occupies residues 822–842 (SSTAEHSSPYSEDPIEDPLQP). A Phosphoserine; by FAM20C modification is found at S859. The segment at 894–927 (LSQDTGSPSGMRPWEDLPSQDTGSPSRMRPWKDP) is disordered. Tandem repeats lie at residues 895–911 (SQDT…EDLP) and 912–928 (SQDT…KDPP). The interval 895 to 928 (SQDTGSPSGMRPWEDLPSQDTGSPSRMRPWKDPP) is 2 X 17 AA tandem repeats. 2 N-linked (GlcNAc...) asparagine glycosylation sites follow: N938 and N977. 2 disordered regions span residues 982–1001 (WGES…HPKF) and 1029–1048 (TRKK…PRTF). The span at 1029 to 1040 (TRKKKKEKHTHH) shows a compositional bias: basic residues. Residues N1074, N1083, N1103, and N1106 are each glycosylated (N-linked (GlcNAc...) asparagine). The tract at residues 1097-1157 (LPDHNQNSSN…SSSPELSEML (61 aa)) is disordered. The segment covering 1099–1111 (DHNQNSSNDTGQA) has biased composition (polar residues). Residues 1139 to 1154 (HSTSDPSHRSSSPELS) are compositionally biased toward low complexity. 35 repeat units span residues 1185 to 1193 (VISPDLSQV), 1194 to 1202 (TLSPELSQT), 1203 to 1211 (NLSPDLSHT), 1212 to 1220 (TLSPELIQR), 1221 to 1229 (NLSPALGQM), 1230 to 1238 (PISPDLSHT), 1239 to 1247 (TLSPDLSHT), 1248 to 1256 (TLSLDLSQT), 1257 to 1265 (NLSPELSQT), 1266 to 1274 (NLSPALGQM), 1275 to 1283 (PLSPDLSHT), 1284 to 1292 (TLSLDFSQT), 1293 to 1301 (NLSPELSHM), 1302 to 1310 (TLSPELSQT), 1311 to 1319 (NLSPALGQM), 1320 to 1328 (PISPDLSHT), 1329 to 1337 (TLSLDFSQT), 1338 to 1346 (NLSPELSQT), 1347 to 1355 (NLSPALGQM), 1356 to 1364 (PLSPDPSHT), 1365 to 1373 (TLSLDLSQT), 1374 to 1382 (NLSPELSQT), 1383 to 1391 (NLSPDLSEM), 1392 to 1400 (PLFADLSQI), 1401 to 1409 (PLTPDLDQM), 1410 to 1418 (TLSPDLGET), 1419 to 1427 (DLSPNFGQM), 1428 to 1436 (SLSPDLSQV), 1437 to 1445 (TLSPDISDT), 1446 to 1454 (TLLPDLSQI), 1455 to 1463 (SPPPDLDQI), 1464 to 1472 (FYPSESSQS), 1473 to 1481 (LLLQEFNES), 1482 to 1490 (FPYPDLGQM), and 1493 to 1501 (PSSPTLNDT). Residues 1185 to 1501 (VISPDLSQVT…SPSSPTLNDT (317 aa)) form a 35 X 9 AA approximate tandem repeats of [TNP]-L-S-P-D-L-S-Q-T region. A disordered region spans residues 1341-1367 (PELSQTNLSPALGQMPLSPDPSHTTLS). An N-linked (GlcNAc...) asparagine glycan is attached at N1479. N-linked (GlcNAc...) asparagine glycosylation occurs at N1499. Residues Y1522, Y1538, and Y1543 each carry the sulfotyrosine modification. N1559 is a glycosylation site (N-linked (GlcNAc...) asparagine). 2 consecutive Plastocyanin-like domains span residues 1578-1751 (NRRN…LLIC) and 1761-1907 (NMPM…DRDC). Residues 1578–1907 (NRRNYYIAAE…TPFLIMDRDC (330 aa)) form the F5/8 type A 3 domain. The residue at position 1593 (Y1593) is a Sulfotyrosine. N1703 carries N-linked (GlcNAc...) asparagine glycosylation. A disulfide bridge connects residues C1725 and C1751. Residues H1843 and H1845 each coordinate Cu cation. 2 disulfide bridges follow: C1907/C2061 and C2066/C2221. 2 F5/8 type C domains span residues 1907-2061 (CRMP…LQGC) and 2066-2221 (CSTP…LFGC). N-linked (GlcNAc...) asparagine glycosylation is found at N2010 and N2209.

It belongs to the multicopper oxidase family. Factor Va, the activated form of factor V, is composed of a heavy chain and a light chain, non-covalently bound. The interaction between the two chains is calcium-dependent. Forms heterodimer with SERPINA5. In terms of processing, thrombin activates factor V proteolytically to the active cofactor, factor Va (formation of a heavy chain at the N-terminus and a light chain at the C-terminus). Post-translationally, sulfation is required for efficient thrombin cleavage and activation and for full procoagulant activity. Activated protein C inactivates factor V and factor Va by proteolytic degradation. In terms of processing, phosphorylated by FAM20C in the extracellular medium. In terms of tissue distribution, plasma.

It is found in the secreted. With respect to regulation, inhibited by SERPINA5. In terms of biological role, central regulator of hemostasis. It serves as a critical cofactor for the prothrombinase activity of factor Xa that results in the activation of prothrombin to thrombin. The chain is Coagulation factor V (F5) from Homo sapiens (Human).